Reading from the N-terminus, the 145-residue chain is D-aminoacyl-tRNA deacylase (145 aa).

The Gly-cisPro motif, important for rejection of L-amino acids signature appears at 137 to 138 (GP).

It belongs to the DTD family. As to quaternary structure, homodimer.

The protein resides in the cytoplasm. It carries out the reaction glycyl-tRNA(Ala) + H2O = tRNA(Ala) + glycine + H(+). It catalyses the reaction a D-aminoacyl-tRNA + H2O = a tRNA + a D-alpha-amino acid + H(+). Its function is as follows. An aminoacyl-tRNA editing enzyme that deacylates mischarged D-aminoacyl-tRNAs. Also deacylates mischarged glycyl-tRNA(Ala), protecting cells against glycine mischarging by AlaRS. Acts via tRNA-based rather than protein-based catalysis; rejects L-amino acids rather than detecting D-amino acids in the active site. By recycling D-aminoacyl-tRNA to D-amino acids and free tRNA molecules, this enzyme counteracts the toxicity associated with the formation of D-aminoacyl-tRNA entities in vivo and helps enforce protein L-homochirality. The protein is D-aminoacyl-tRNA deacylase of Lactobacillus helveticus (strain DPC 4571).